We begin with the raw amino-acid sequence, 252 residues long: Imidazole glycerol phosphate synthase subunit HisF (252 aa).

Catalysis depends on residues Asp11 and Asp130.

The protein belongs to the HisA/HisF family. In terms of assembly, heterodimer of HisH and HisF.

It localises to the cytoplasm. It carries out the reaction 5-[(5-phospho-1-deoxy-D-ribulos-1-ylimino)methylamino]-1-(5-phospho-beta-D-ribosyl)imidazole-4-carboxamide + L-glutamine = D-erythro-1-(imidazol-4-yl)glycerol 3-phosphate + 5-amino-1-(5-phospho-beta-D-ribosyl)imidazole-4-carboxamide + L-glutamate + H(+). The protein operates within amino-acid biosynthesis; L-histidine biosynthesis; L-histidine from 5-phospho-alpha-D-ribose 1-diphosphate: step 5/9. Its function is as follows. IGPS catalyzes the conversion of PRFAR and glutamine to IGP, AICAR and glutamate. The HisF subunit catalyzes the cyclization activity that produces IGP and AICAR from PRFAR using the ammonia provided by the HisH subunit. This is Imidazole glycerol phosphate synthase subunit HisF from Bacillus anthracis (strain CDC 684 / NRRL 3495).